The sequence spans 128 residues: UPF0325 protein CKO_03204 (128 aa).

The protein belongs to the UPF0325 family.

This is UPF0325 protein CKO_03204 from Citrobacter koseri (strain ATCC BAA-895 / CDC 4225-83 / SGSC4696).